Here is a 128-residue protein sequence, read N- to C-terminus: Fluoride-specific ion channel FluC (128 aa).

Helical transmembrane passes span 2-22, 35-55, 67-87, and 96-116; these read FYSI…RWCL, LGTL…AVVF, LFVI…SVEV, and FGWA…LTAL. Na(+) contacts are provided by glycine 75 and threonine 78.

This sequence belongs to the fluoride channel Fluc/FEX (TC 1.A.43) family.

It localises to the cell inner membrane. The enzyme catalyses fluoride(in) = fluoride(out). Its activity is regulated as follows. Na(+) is not transported, but it plays an essential structural role and its presence is essential for fluoride channel function. Its function is as follows. Fluoride-specific ion channel. Important for reducing fluoride concentration in the cell, thus reducing its toxicity. This Burkholderia cenocepacia (strain ATCC BAA-245 / DSM 16553 / LMG 16656 / NCTC 13227 / J2315 / CF5610) (Burkholderia cepacia (strain J2315)) protein is Fluoride-specific ion channel FluC.